We begin with the raw amino-acid sequence, 608 residues long: X-ray repair cross-complementing protein 6 (608 aa).

The span at 1–11 (MSEWESYYKTE) shows a compositional bias: basic and acidic residues. The tract at residues 1–29 (MSEWESYYKTEGEEEEEEEESPDTGGEYK) is disordered. Ser-2 bears the N-acetylserine mark. Ser-2 bears the Phosphoserine mark. At Ser-6 the chain carries Phosphoserine; by PRKDC. Positions 12-22 (GEEEEEEEESP) are enriched in acidic residues. Lys-29 functions as the Schiff-base intermediate with DNA; for 5'-deoxyribose-5-phosphate lyase activity in the catalytic mechanism. At Lys-29 the chain carries N6-acetyllysine. The residue at position 49 (Ser-49) is a Phosphoserine; by PRKDC. A Ku domain is found at 259–466 (FKLGEDVVLM…IDKMKAIVQK (208 aa)). A DNA-binding region spans residues 275–339 (VQKANKPFPV…EETEELKRFD (65 aa)). Lys-315 participates in a covalent cross-link: Glycyl lysine isopeptide (Lys-Gly) (interchain with G-Cter in SUMO2). An N6-acetyllysine mark is found at Lys-329, Lys-336, and Lys-459. Positions 371–480 (SLVSGSSTLF…YRSDSFENPV (110 aa)) are interaction with XRCC5. Ser-475, Ser-518, and Ser-548 each carry phosphoserine. The disordered stretch occupies residues 534–557 (PEGKVAKRKQDDEGSTSKKPKVEL). The span at 537–557 (KVAKRKQDDEGSTSKKPKVEL) shows a compositional bias: basic and acidic residues. An interaction with DEAF1 region spans residues 548–607 (STSKKPKVELSEEELKAHFRKGTLGKLTVPTLKDICKAHGLKSGPKKQELLDALIRHLEK). Residue Lys-554 forms a Glycyl lysine isopeptide (Lys-Gly) (interchain with G-Cter in SUMO2) linkage. Residue Ser-558 is modified to Phosphoserine. Lys-568 carries the post-translational modification N6,N6,N6-trimethyllysine. The SAP domain occupies 571–605 (LGKLTVPTLKDICKAHGLKSGPKKQELLDALIRHL). The segment at 576–581 (VPTLKD) is interaction with BAX.

This sequence belongs to the ku70 family. As to quaternary structure, heterodimer composed of XRCC5/Ku80 and XRCC6/Ku70. Component of the core long-range non-homologous end joining (NHEJ) complex (also named DNA-PK complex) composed of PRKDC, LIG4, XRCC4, XRCC6/Ku70, XRCC5/Ku86 and NHEJ1/XLF. Additional component of the NHEJ complex includes PAXX. Following autophosphorylation, PRKDC dissociates from DNA, leading to formation of the short-range NHEJ complex, composed of LIG4, XRCC4, XRCC6/Ku70, XRCC5/Ku86 and NHEJ1/XLF. The XRCC5-XRCC6 dimer also associates with NAA15, and this complex binds to the osteocalcin promoter and activates osteocalcin expression. In addition, XRCC6 interacts with the osteoblast-specific transcription factors MSX2, RUNX2 and DLX5. Interacts with ELF3. Interacts with ATP23. The XRCC5-XRRC6 dimer associates in a DNA-dependent manner with APEX1. Binds to CDK9. Identified in a complex with DEAF1 and XRCC5. Interacts with DEAF1 (via the SAND domain); the interaction is direct and may be inhibited by DNA-binding. Interacts with CLU. Interacts with NR4A3; the DNA-dependent protein kinase complex DNA-PK phosphorylates and activates NR4A3 and prevents NR4A3 ubiquitinylation and degradation. Interacts with CYREN (via KBM motif). Interacts (via N-terminus) with HSF1 (via N-terminus); this interaction is direct and prevents XRCC5/XRCC6 heterodimeric binding and non-homologous end joining (NHEJ) repair activities induced by ionizing radiation (IR). Part of the HDP-RNP complex composed of at least HEXIM1, PRKDC, XRCC5, XRCC6, paraspeckle proteins (SFPQ, NONO, PSPC1, RBM14, and MATR3) and NEAT1 RNA. Interacts with HMBOX1. Interacts with ATF7. Interacts with APLF (via KBM motif). Interacts with WRN (via KBM motif). The XRCC5-XRCC6 dimer associates with ALKBH2. Interacts with TPRN; TPRN interacts with a number of DNA damage response proteins, is recruited to sites of DNA damage and may play a role in DNA damage repair. When not acetylated, interacts with BAX. Interacts with ERCC6L2. Post-translationally, phosphorylation by PRKDC may enhance helicase activity. Phosphorylation of Ser-49 does not affect DNA repair. ADP-ribosylated by PARP3. In terms of processing, methylation by SETD4 leads to accumulation in the cytoplasm and is a prerequisite for acetylation, possibly due to the change of subcellular from the nucleus to the cytosol initiated by methylation, acetylation occurring in the cytosol. Post-translationally, acetylation can be catalyzed in vitro by CREBBP/CBP and KAT2B/PCAF.

It localises to the nucleus. It is found in the chromosome. The protein resides in the cytoplasm. Functionally, single-stranded DNA-dependent ATP-dependent helicase that plays a key role in DNA non-homologous end joining (NHEJ) by recruiting DNA-PK to DNA. Required for double-strand break repair and V(D)J recombination. Also has a role in chromosome translocation. Has a role in chromosome translocation. The DNA helicase II complex binds preferentially to fork-like ends of double-stranded DNA in a cell cycle-dependent manner. It works in the 3'-5' direction. During NHEJ, the XRCC5-XRRC6 dimer performs the recognition step: it recognizes and binds to the broken ends of the DNA and protects them from further resection. Binding to DNA may be mediated by XRCC6. The XRCC5-XRRC6 dimer acts as a regulatory subunit of the DNA-dependent protein kinase complex DNA-PK by increasing the affinity of the catalytic subunit PRKDC to DNA by 100-fold. The XRCC5-XRRC6 dimer is probably involved in stabilizing broken DNA ends and bringing them together. The assembly of the DNA-PK complex to DNA ends is required for the NHEJ ligation step. Probably also acts as a 5'-deoxyribose-5-phosphate lyase (5'-dRP lyase), by catalyzing the beta-elimination of the 5' deoxyribose-5-phosphate at an abasic site near double-strand breaks. 5'-dRP lyase activity allows to 'clean' the termini of abasic sites, a class of nucleotide damage commonly associated with strand breaks, before such broken ends can be joined. The XRCC5-XRRC6 dimer together with APEX1 acts as a negative regulator of transcription. In association with NAA15, the XRCC5-XRRC6 dimer binds to the osteocalcin promoter and activates osteocalcin expression. Plays a role in the regulation of DNA virus-mediated innate immune response by assembling into the HDP-RNP complex, a complex that serves as a platform for IRF3 phosphorylation and subsequent innate immune response activation through the cGAS-STING pathway. Negatively regulates apoptosis by interacting with BAX and sequestering it from the mitochondria. Might have deubiquitination activity, acting on BAX. The sequence is that of X-ray repair cross-complementing protein 6 (Xrcc6) from Mus musculus (Mouse).